The following is a 173-amino-acid chain: Ribosome maturation factor RimM (173 aa).

Positions 90-169 (EDEYFWFDIL…RIDTKGAQDI (80 aa)) constitute a PRC barrel domain.

Belongs to the RimM family. In terms of assembly, binds ribosomal protein uS19.

The protein localises to the cytoplasm. In terms of biological role, an accessory protein needed during the final step in the assembly of 30S ribosomal subunit, possibly for assembly of the head region. Essential for efficient processing of 16S rRNA. May be needed both before and after RbfA during the maturation of 16S rRNA. It has affinity for free ribosomal 30S subunits but not for 70S ribosomes. The chain is Ribosome maturation factor RimM from Nitratiruptor sp. (strain SB155-2).